We begin with the raw amino-acid sequence, 555 residues long: Glutamate--tRNA ligase (555 aa).

The 'HIGH' region signature appears at 100 to 110 (PNPSGPLHIGH).

This sequence belongs to the class-I aminoacyl-tRNA synthetase family. Glutamate--tRNA ligase type 2 subfamily.

It localises to the cytoplasm. The enzyme catalyses tRNA(Glu) + L-glutamate + ATP = L-glutamyl-tRNA(Glu) + AMP + diphosphate. Functionally, catalyzes the attachment of glutamate to tRNA(Glu) in a two-step reaction: glutamate is first activated by ATP to form Glu-AMP and then transferred to the acceptor end of tRNA(Glu). The polypeptide is Glutamate--tRNA ligase (Methanococcus maripaludis (strain DSM 14266 / JCM 13030 / NBRC 101832 / S2 / LL)).